The chain runs to 207 residues: Holliday junction resolvase RecU (207 aa).

Positions 1–21 (MTIRYPNGQVYRQPGPTKSKS) are disordered. 4 residues coordinate Mg(2+): threonine 87, aspartate 89, glutamate 102, and glutamine 121.

The protein belongs to the RecU family. Mg(2+) serves as cofactor.

It is found in the cytoplasm. The catalysed reaction is Endonucleolytic cleavage at a junction such as a reciprocal single-stranded crossover between two homologous DNA duplexes (Holliday junction).. Its function is as follows. Endonuclease that resolves Holliday junction intermediates in genetic recombination. Cleaves mobile four-strand junctions by introducing symmetrical nicks in paired strands. Promotes annealing of linear ssDNA with homologous dsDNA. Required for DNA repair, homologous recombination and chromosome segregation. This Lactiplantibacillus plantarum (strain ATCC BAA-793 / NCIMB 8826 / WCFS1) (Lactobacillus plantarum) protein is Holliday junction resolvase RecU.